A 147-amino-acid polypeptide reads, in one-letter code: Ribosome maturation factor RimP (147 aa).

Belongs to the RimP family.

It is found in the cytoplasm. Its function is as follows. Required for maturation of 30S ribosomal subunits. In Legionella pneumophila (strain Paris), this protein is Ribosome maturation factor RimP.